The sequence spans 67 residues: DNA-directed RNA polymerase subunit omega (67 aa).

Belongs to the RNA polymerase subunit omega family. In terms of assembly, the RNAP catalytic core consists of 2 alpha, 1 beta, 1 beta' and 1 omega subunit. When a sigma factor is associated with the core the holoenzyme is formed, which can initiate transcription.

The enzyme catalyses RNA(n) + a ribonucleoside 5'-triphosphate = RNA(n+1) + diphosphate. In terms of biological role, promotes RNA polymerase assembly. Latches the N- and C-terminal regions of the beta' subunit thereby facilitating its interaction with the beta and alpha subunits. The protein is DNA-directed RNA polymerase subunit omega of Acidovorax ebreus (strain TPSY) (Diaphorobacter sp. (strain TPSY)).